A 254-amino-acid polypeptide reads, in one-letter code: NAD-dependent protein deacylase (254 aa).

Residues 1-250 (MERLEEARKR…LPPSPEDQAE (250 aa)) form the Deacetylase sirtuin-type domain. Position 22-41 (22-41 (GAGISKPSGIPTFRDAEGLW)) interacts with NAD(+). Substrate is bound by residues Tyr66 and Arg69. Residue 104–107 (QNVD) participates in NAD(+) binding. Residue His122 is the Proton acceptor of the active site. Zn(2+) is bound by residues Cys130, Cys133, Cys149, and Cys152. NAD(+)-binding positions include 189 to 191 (GTS), 215 to 217 (NPE), and Ala233.

The protein belongs to the sirtuin family. Class III subfamily. It depends on Zn(2+) as a cofactor.

The protein resides in the cytoplasm. It catalyses the reaction N(6)-acetyl-L-lysyl-[protein] + NAD(+) + H2O = 2''-O-acetyl-ADP-D-ribose + nicotinamide + L-lysyl-[protein]. The catalysed reaction is N(6)-succinyl-L-lysyl-[protein] + NAD(+) + H2O = 2''-O-succinyl-ADP-D-ribose + nicotinamide + L-lysyl-[protein]. Its function is as follows. NAD-dependent lysine deacetylase and desuccinylase that specifically removes acetyl and succinyl groups on target proteins. Modulates the activities of several proteins which are inactive in their acylated form. This is NAD-dependent protein deacylase from Thermus thermophilus (strain ATCC 27634 / DSM 579 / HB8).